A 190-amino-acid chain; its full sequence is Probable nicotinate-nucleotide adenylyltransferase (190 aa).

Belongs to the NadD family.

The enzyme catalyses nicotinate beta-D-ribonucleotide + ATP + H(+) = deamido-NAD(+) + diphosphate. Its pathway is cofactor biosynthesis; NAD(+) biosynthesis; deamido-NAD(+) from nicotinate D-ribonucleotide: step 1/1. Functionally, catalyzes the reversible adenylation of nicotinate mononucleotide (NaMN) to nicotinic acid adenine dinucleotide (NaAD). The chain is Probable nicotinate-nucleotide adenylyltransferase from Frankia alni (strain DSM 45986 / CECT 9034 / ACN14a).